A 491-amino-acid chain; its full sequence is MSDSDITFYCLSSILSVLLIFIFILIKRKQAKPKLNLPPGKMGWPFLGETIGYLKPYSATTLGEFMDQHIARYGKIYKSKLFGEPAIVSADAGLNRFILQNEGKLFECSYPRSIGGILGKWSMLVLVGDMHRDMRLISLNFLSHARLRTHLLKEVEKHTRLVISSWKENSTFAAQDEAKKFTFNLMAEHIMSLQPGKIETEKLKKEYVTFMKGVVSAPLNFPGTAYWKALKSRGTILKFIEGKMEERIKRMKEGNENLEEDDLLNWVLKHSNLSTEQILDLILSLLFAGHETSSVSIALAIYFLPGCPQAILQLREEHKEIARAKKQAGETELTWEDYKKMEFTHCVVNETLRLGNVVRFLHRKALKDVRYKGYDIPCGWKVLPVIAAVHLDPLLFDQPQHFNPWRWQNNGNCPNFSGASSNSNNIFLPFGGGPRLCAGSELAKLEMAVFIHHLILNYHWELTDNNDQAFAYPFVDFPKGLQIRVQSHSLI.

A helical transmembrane segment spans residues 6–26 (ITFYCLSSILSVLLIFIFILI). A heme-binding site is contributed by C437.

Belongs to the cytochrome P450 family. Mainly expressed in leaves and seed pods and, to a lower extent, in flowers and stems.

It localises to the membrane. It carries out the reaction cholesterol + reduced [NADPH--hemoprotein reductase] + O2 = (22S)-22-hydroxycholesterol + oxidized [NADPH--hemoprotein reductase] + H2O + H(+). Its pathway is steroid metabolism; cholesterol metabolism. In terms of biological role, canonical brassinosteroid (BR)-biosynthetic enzyme capable of converting cholesterol to 22S-hydroxycholesterol via sterol-C22 hydroxylation. The sequence is that of Cholesterol 22-monohydroxylase CYP90B51 from Trigonella foenum-graecum (Fenugreek).